Here is a 360-residue protein sequence, read N- to C-terminus: Putative transcription factor A494R (360 aa).

A zinc finger spans residues 153-175 (CTCGGQMELWVNSTQSDLVCNEC).

It belongs to the nucleo-cytoplasmic large DNA viruses (NCLDVs) VLTF-3 family.

In terms of biological role, putative transcription factor. The chain is Putative transcription factor A494R from Paramecium bursaria Chlorella virus 1 (PBCV-1).